The sequence spans 33 residues: Mu-theraphotoxin-Os1a (33 aa).

3 disulfide bridges follow: Cys2–Cys17, Cys9–Cys22, and Cys16–Cys29. A Leucine amide modification is found at Leu33.

It belongs to the neurotoxin 10 (Hwtx-1) family. 14 (Hntx-1) subfamily. As to quaternary structure, monomer. Expressed by the venom gland.

The protein resides in the secreted. Its function is as follows. Potently and reversibly inhibits some human voltage-gated sodium channels (Nav1.1/SCN1A (IC(50)=72.0 nM), Nav1.2/SCN2A (IC(50)=75.5 nM), Nav1.6/SCN8A (IC(50)=115.0 nM), Nav1.7/SCN9A (IC(50)=52.7-129.5 nM), Nav1.3/SCN3A (IC(50)=306.6 nM)). The hNav1.7/SCN9A channel inhibition occurs without any change in steady-state inactivation- and conductance-voltage relationships. On adult mouse DRG neurons, this toxin is approximately 1000-fold more efficient to inhibit tetrodotoxin (TTX)-sensitive than TTX-resistant sodium currents. In vivo, this toxin exhibits analgesic effects in mice pain models. In Omothymus schioedtei (Malaysian earth tiger tarantula), this protein is Mu-theraphotoxin-Os1a.